The following is a 384-amino-acid chain: Polar flagellin C (384 aa).

Residues A317–D347 are a coiled coil.

It belongs to the bacterial flagellin family. In terms of assembly, heteromer of multiple flagellin subunits including FlaA, FlaB/D, FlaC, FlaE and FlaF. Homomer of FlaC is not able to form a functional filament.

Its subcellular location is the secreted. The protein localises to the bacterial flagellum. Functionally, flagellin is the subunit protein which polymerizes to form the filaments of bacterial flagella. FlaC is not essential for polar flagellar synthesis and swimming motility. Homomer of FlaC is not able to form a functional filament. The chain is Polar flagellin C (flaC) from Vibrio parahaemolyticus serotype O3:K6 (strain RIMD 2210633).